Here is a 242-residue protein sequence, read N- to C-terminus: Caffeoyl-CoA O-methyltransferase 2 (242 aa).

Lysine 16 provides a ligand contact to substrate. S-adenosyl-L-methionine is bound by residues threonine 58, glutamate 80, 82–83 (GV), serine 88, aspartate 106, and alanine 135. Aspartate 158 serves as a coordination point for substrate. A divalent metal cation is bound at residue aspartate 158. An S-adenosyl-L-methionine-binding site is contributed by aspartate 160. Residues aspartate 184 and asparagine 185 each coordinate a divalent metal cation. Position 189 (asparagine 189) interacts with substrate.

The protein belongs to the class I-like SAM-binding methyltransferase superfamily. Cation-dependent O-methyltransferase family. CCoAMT subfamily. A divalent metal cation serves as cofactor. Mostly expressed in petal limbs and tubes, and, at low levels, in stems, roots and leaves.

It is found in the cytoplasm. It localises to the cytosol. It catalyses the reaction (E)-caffeoyl-CoA + S-adenosyl-L-methionine = (E)-feruloyl-CoA + S-adenosyl-L-homocysteine + H(+). The enzyme catalyses (E)-5-hydroxyferuloyl-CoA + S-adenosyl-L-methionine = (E)-sinapoyl-CoA + S-adenosyl-L-homocysteine + H(+). It functions in the pathway aromatic compound metabolism; phenylpropanoid biosynthesis. Functionally, involved in the production of floral volatile phenylpropanoids in flowers of fragrant cultivars (e.g. cv. Mitchell and cv. V26) from cinnamic acid, a common precursor with the anthocyanin biosynthesis pathway involved in flower pigmentation. Methylates caffeoyl-CoA to feruloyl-CoA, also able to methylate 5-hydroxyferuloyl-CoA. The sequence is that of Caffeoyl-CoA O-methyltransferase 2 from Petunia hybrida (Petunia).